The chain runs to 357 residues: Histidinol-phosphate aminotransferase (357 aa).

Lysine 212 carries the post-translational modification N6-(pyridoxal phosphate)lysine.

It belongs to the class-II pyridoxal-phosphate-dependent aminotransferase family. Histidinol-phosphate aminotransferase subfamily. Homodimer. Pyridoxal 5'-phosphate serves as cofactor.

The enzyme catalyses L-histidinol phosphate + 2-oxoglutarate = 3-(imidazol-4-yl)-2-oxopropyl phosphate + L-glutamate. It participates in amino-acid biosynthesis; L-histidine biosynthesis; L-histidine from 5-phospho-alpha-D-ribose 1-diphosphate: step 7/9. In Pectobacterium atrosepticum (strain SCRI 1043 / ATCC BAA-672) (Erwinia carotovora subsp. atroseptica), this protein is Histidinol-phosphate aminotransferase.